A 4328-amino-acid chain; its full sequence is Cadherin-4 (4328 aa).

A signal peptide spans 1-23; sequence MKKHRVFHLFLLIFCKAISLVTT. Topologically, residues 24–4072 are extracellular; it reads SSSTEQIFEF…TVLEFLLKAE (4049 aa). N-linked (GlcNAc...) asparagine glycans are attached at residues N39 and N56. Cadherin domains follow at residues 108 to 153 and 156 to 275; these read PLNR…SPVF and GEQG…NPNI. N196, N330, N339, N365, N431, N452, and N584 each carry an N-linked (GlcNAc...) asparagine glycan. 11 consecutive Cadherin domains span residues 384-492, 507-608, 609-720, 721-826, 827-934, 935-1051, 1047-1156, 1175-1262, 1265-1363, 1364-1467, and 1476-1570; these read DNEK…APVF, PGDV…SPVF, SSFP…SPQF, DEVS…PPKC, VVQH…AIEF, DDVA…KPMY, KKPM…SPTF, RIFA…PPEI, KKSD…RPKF, SASH…SPYF, and VDES…APET. N-linked (GlcNAc...) asparagine glycosylation is found at N811 and N899. The Cell attachment site signature appears at 1090–1092; the sequence is RGD. N1192 carries an N-linked (GlcNAc...) asparagine glycan. The segment at 1246–1267 is disordered; sequence NSAGQKPRKSKNSPPEISGKKS. Residue N1335 is glycosylated (N-linked (GlcNAc...) asparagine). N1610 carries N-linked (GlcNAc...) asparagine glycosylation. Residues 1671–1784 form the Cadherin 14 domain; sequence RRQVYRGTIR…IDENDEPPRF (114 aa). A glycan (N-linked (GlcNAc...) asparagine) is linked at N1895. One can recognise a Cadherin 15 domain in the interval 1917–1984; that stretch reads FSIVNPHEAF…ENINDETPIF (68 aa). N2059, N2150, N2216, N2367, N2413, N2440, and N2535 each carry an N-linked (GlcNAc...) asparagine glycan. Cadherin domains are found at residues 2187 to 2285 and 2286 to 2397; these read EKLK…MPEF and IRSD…PPRF. Cadherin domains lie at 2429–2505, 2506–2608, 2609–2712, 2719–2813, 2828–2915, 2913–3011, 3012–3113, 3114–3216, and 3217–3326; these read LQFS…PPFF, VLPF…VPRF, SNSH…APAF, FTIS…PPQF, SPIL…CPEA, PEAN…RPKI, IEKL…APTF, EKST…APKF, and EKEK…APTF. N-linked (GlcNAc...) asparagine glycans are attached at residues N2844, N2916, N2941, N3083, and N3143. Residue N3330 is glycosylated (N-linked (GlcNAc...) asparagine). Cadherin domains follow at residues 3335 to 3428 and 3429 to 3554; these read VQEG…APTM and KPMK…VDEF. N-linked (GlcNAc...) asparagine glycosylation is present at N3512. In terms of domain architecture, EGF-like 1 spans 3706 to 3744; that stretch reads ETNQCAKSPCEQWQLCIPSVHNSTYECVCPLGMEGDKCS. 10 cysteine pairs are disulfide-bonded: C3710–C3721, C3715–C3732, C3734–C3743, C3898–C3925, C3933–C3944, C3938–C3954, C3956–C3965, C3972–C3983, C3977–C3992, and C3994–C4003. N3727 carries an N-linked (GlcNAc...) asparagine glycan. Residues 3757–3925 form the Laminin G-like domain; that stretch reads EAELSVGGDG…MKLFGAQPGC (169 aa). 2 EGF-like domains span residues 3929–3966 and 3968–4004; these read TSSPCNDLPCQHAGTCISQGKSHFKCECPSRYSGNVCE and DLEPCASSPCPTGIQCIPFYNDYLCKCPNGFTGKHCE. N4043 carries an N-linked (GlcNAc...) asparagine glycan. Residues 4073–4093 traverse the membrane as a helical segment; the sequence is IVIVILGVLLLLLVFCLTFIT. The Cytoplasmic segment spans residues 4094–4328; it reads WKCCKKNRDP…IDEEVNIHIS (235 aa). Disordered regions lie at residues 4143-4215 and 4268-4311; these read TSSV…SSLR and NFER…PISL. Positions 4178-4196 are enriched in basic and acidic residues; that stretch reads TRRDPLPSDKFRRVDETAN. The Cell attachment site motif lies at 4207–4209; the sequence is RGD.

In larvae and adult, it is expressed in various tissues including pharyngeal muscle, hypodermis and gonad. In the nervous system it is expressed in sensory neurons and motor neurons in the ventral cord.

The protein resides in the cell membrane. In terms of biological role, potential calcium-dependent cell-adhesion protein that controls axon guidance in the ventral cord. This Caenorhabditis elegans protein is Cadherin-4.